The primary structure comprises 448 residues: MRVSRYFGTDGIRGRVGQGLISADFVLRLGNALGRVLAQGRDTRPMVLIGKDTRISGYMFESALEAGLVAAGADVQLIGPMPTPAIAFLTNTLRADAGVVISASHNPHDDNGIKFFSAMGEKLDDATEAAIEAAIEAPFLTVDSEYLGKVKRTRDAIGRYIEFSKASVPRGFTLRGLKLVLDCAHGATYHIAPMLFRELGAELVAIGVDPDGLNINAGVGSTHLETLAATVRESGADLGIAFDGDGDRVLMTDAQGRTVDGDDLLYVLARAWRASGRLKGTVVGTLMSNYGLEQALGTLGIPFIRAKVGDRYVHQALVESGGVLGGEASGHLLCLDRATTGDGIVSALQVLEVLRHEGLTLSQALLGLHKVPQKTVNVCWSGPARAAVEMPEVRQALVEAQAAVQGRGRVFLRPSGTEPVVRITVEADDVVLMQQTLDRLADVVRDAA.

Catalysis depends on Ser104, which acts as the Phosphoserine intermediate. Positions 104, 243, 245, and 247 each coordinate Mg(2+). Residue Ser104 is modified to Phosphoserine.

Belongs to the phosphohexose mutase family. Requires Mg(2+) as cofactor. Activated by phosphorylation.

The catalysed reaction is alpha-D-glucosamine 1-phosphate = D-glucosamine 6-phosphate. Catalyzes the conversion of glucosamine-6-phosphate to glucosamine-1-phosphate. The sequence is that of Phosphoglucosamine mutase from Xylella fastidiosa (strain 9a5c).